The primary structure comprises 327 residues: Ankyrin repeat domain-containing protein SOWAHD (327 aa).

The interval 1 to 31 is disordered; sequence MAQALEDGNPLPKASNRPAESEAPSDPQIKD. ANK repeat units lie at residues 112–141, 147–162, and 186–216; these read CLEP…AEPS, DPIT…AKHG, and PGSG…LGAD. The disordered stretch occupies residues 251–311; that stretch reads ERDRKRENAN…EKKASSTQEG (61 aa). A compositionally biased stretch (low complexity) spans 260–275; it reads NNNSSRTTTTTTTTSR. The span at 292-305 shows a compositional bias: basic and acidic residues; the sequence is HYKEASQPVKEKKA.

It belongs to the SOWAH family.

The chain is Ankyrin repeat domain-containing protein SOWAHD (Sowahd) from Mus musculus (Mouse).